An 80-amino-acid chain; its full sequence is MAFLKKSLFLVLFLGIVSLSICEEEKREGEEEEKQEEENEELSEEELREKRAWLDKLKNLGKVVGKVALGVVQNYLNPRQ.

The N-terminal stretch at 1–22 is a signal peptide; sequence MAFLKKSLFLVLFLGIVSLSIC. Positions 23 to 49 are excised as a propeptide; the sequence is EEEKREGEEEEKQEEENEELSEEELRE.

It belongs to the frog skin active peptide (FSAP) family. Dermaseptin subfamily. Expressed by the skin glands.

It localises to the secreted. Has antibacterial activity. This chain is Raniseptin-5, found in Boana raniceps (Chaco tree frog).